The following is a 238-amino-acid chain: Small ribosomal subunit protein uS2 (238 aa).

This sequence belongs to the universal ribosomal protein uS2 family.

The sequence is that of Small ribosomal subunit protein uS2 from Actinobacillus pleuropneumoniae serotype 5b (strain L20).